We begin with the raw amino-acid sequence, 329 residues long: NAD kinase (329 aa).

A disordered region spans residues 1 to 26 (MTTPGTDHNADQGADSGDKATKAASG). The Proton acceptor role is filled by aspartate 104. Residues 104–105 (DG), arginine 109, 179–180 (NE), aspartate 209, and 220–225 (TAYAFS) contribute to the NAD(+) site.

The protein belongs to the NAD kinase family. The cofactor is a divalent metal cation.

It is found in the cytoplasm. It carries out the reaction NAD(+) + ATP = ADP + NADP(+) + H(+). Its function is as follows. Involved in the regulation of the intracellular balance of NAD and NADP, and is a key enzyme in the biosynthesis of NADP. Catalyzes specifically the phosphorylation on 2'-hydroxyl of the adenosine moiety of NAD to yield NADP. This is NAD kinase from Corynebacterium jeikeium (strain K411).